The following is a 199-amino-acid chain: Interleukin-11 (199 aa).

The first 21 residues, 1 to 21 (MNCVCRLVLVVLSLWPDTAVA), serve as a signal peptide directing secretion. Residues 182 to 190 (HLTLDWAVR) are important for interaction with IL11RA and for the stimulation of cell proliferation.

It belongs to the IL-6 superfamily. Interacts with IL11RA to associate with IL6ST, giving rise to a multimeric signaling complex.

Its subcellular location is the secreted. Functionally, cytokine that stimulates the proliferation of hematopoietic stem cells and megakaryocyte progenitor cells and induces megakaryocyte maturation resulting in increased platelet production. Also promotes the proliferation of hepatocytes in response to liver damage. Binding to its receptor formed by IL6ST and IL11RA activates a signaling cascade that promotes cell proliferation. Signaling leads to the activation of intracellular protein kinases and the phosphorylation of STAT3. The interaction with the membrane-bound IL11RA and IL6ST stimulates 'classic signaling', whereas the binding of IL11 and soluble IL11RA to IL6ST stimulates 'trans-signaling'. The protein is Interleukin-11 of Homo sapiens (Human).